A 215-amino-acid chain; its full sequence is Kinetochore protein Spc25 (215 aa).

A coiled-coil region spans residues 43 to 114 (DNLLTAMEKA…MECIHALKRA (72 aa)).

The protein belongs to the SPC25 family. As to quaternary structure, component of the Ndc80 complex, which is composed of Ndc80, Nuf2 and Spc25.

It localises to the nucleus. It is found in the chromosome. The protein resides in the centromere. The protein localises to the kinetochore. Functionally, acts as a component of the essential kinetochore-associated Ndc80 complex, which is required for chromosome segregation and spindle checkpoint activity during meiosis and mitosis. Required for kinetochore integrity and the organization of stable microtubule binding sites in the outer plate of the kinetochore. Participates in SAC signaling that responds specifically to disruptions in spindle microtubule dynamics. The NDC80 complex synergistically enhances the affinity of the SKA1 complex for microtubules and may allow the NDC80 complex to track depolymerizing microtubules. The chain is Kinetochore protein Spc25 from Drosophila ananassae (Fruit fly).